The sequence spans 356 residues: Uroporphyrinogen decarboxylase (356 aa).

8 residues coordinate coproporphyrinogen I: Arg-33, Ala-35, Arg-37, Arg-46, Asp-82, Tyr-159, Ser-214, and His-334. Coproporphyrinogen III contacts are provided by Arg-33, Ala-35, and Arg-37. Residues Asp-82, Tyr-159, Ser-214, and His-334 each coordinate coproporphyrinogen III.

It belongs to the uroporphyrinogen decarboxylase family. In terms of assembly, homodimer.

The protein resides in the cytoplasm. Its subcellular location is the cytosol. It catalyses the reaction uroporphyrinogen III + 4 H(+) = coproporphyrinogen III + 4 CO2. The protein operates within porphyrin-containing compound metabolism; protoporphyrin-IX biosynthesis; coproporphyrinogen-III from 5-aminolevulinate: step 4/4. In terms of biological role, catalyzes the decarboxylation of four acetate groups of uroporphyrinogen-III to yield coproporphyrinogen-III. The polypeptide is Uroporphyrinogen decarboxylase (Drosophila melanogaster (Fruit fly)).